Consider the following 67-residue polypeptide: Probable Sec-independent protein translocase protein TatE (67 aa).

A helical membrane pass occupies residues 4–21; that stretch reads ISITKLLVVAALVVLLFG.

It belongs to the TatA/E family. TatE subfamily.

The protein localises to the cell inner membrane. Its function is as follows. Part of the twin-arginine translocation (Tat) system that transports large folded proteins containing a characteristic twin-arginine motif in their signal peptide across membranes. TatE shares overlapping functions with TatA. The chain is Probable Sec-independent protein translocase protein TatE from Salmonella dublin (strain CT_02021853).